A 65-amino-acid chain; its full sequence is Light-harvesting protein B-800-850 alpha chain C (65 aa).

Topologically, residues 1-11 (MNQGRIWTVVS) are cytoplasmic. Residues 12 to 35 (PTVGLPLLLGSVAAIAFAVHFAVL) traverse the membrane as a helical segment. His31 lines the a bacteriochlorophyll pocket. The Periplasmic portion of the chain corresponds to 36–65 (ENTSWVAAFMNGKSVAAAPAPAAPAAPAKK).

The protein belongs to the antenna complex alpha subunit family. As to quaternary structure, the core complex is formed by different alpha and beta chains, binding bacteriochlorophyll molecules, and arranged most probably in tetrameric structures disposed around the reaction center. The non-pigmented gamma chains may constitute additional components.

It localises to the cell inner membrane. Antenna complexes are light-harvesting systems, which transfer the excitation energy to the reaction centers. This is Light-harvesting protein B-800-850 alpha chain C (pucAC) from Rhodopseudomonas palustris.